The following is a 176-amino-acid chain: Small ribosomal subunit protein bS6 (176 aa).

The interval 97-176 (DQYTPNDSPP…VEPVDTTSEE (80 aa)) is disordered. Over residues 140–160 (AVETVEPPAEPAEPVEAVETV) the composition is skewed to low complexity. Residues 161–176 (DTTEETVEPVDTTSEE) show a composition bias toward acidic residues.

Belongs to the bacterial ribosomal protein bS6 family.

Functionally, binds together with bS18 to 16S ribosomal RNA. The chain is Small ribosomal subunit protein bS6 from Gloeothece citriformis (strain PCC 7424) (Cyanothece sp. (strain PCC 7424)).